Consider the following 250-residue polypeptide: MTKTPAKKKRARSSKAKGTDANAALEARIGHSFADPNLLMQGITHVSALKSGRKRGDSYQRLEFLGDHVLGLVVSDMLYHAFPNADEGELSKRLAELVRKESCADVAKSLGLLDDIKLGSVGPSADARLRKSVLGDICEAVIGAIFLDGGHAAAAEFVKRNWTERMHKPRRPLRDPKTVLQEWAQGKGLPTPVYREVERTGPHHDPQFRVAVDLPGLAPAEGIGGSKRAAEKVAASVMIEREGVGGGNDG.

Basic residues predominate over residues 1-15 (MTKTPAKKKRARSSK). Residues 1-21 (MTKTPAKKKRARSSKAKGTDA) form a disordered region. Positions 22 to 150 (NAALEARIGH…VIGAIFLDGG (129 aa)) constitute an RNase III domain. Residue Glu63 participates in Mg(2+) binding. Asp67 is an active-site residue. Residues Asp136 and Glu139 each contribute to the Mg(2+) site. The active site involves Glu139. The DRBM domain maps to 175–244 (DPKTVLQEWA…ASVMIEREGV (70 aa)).

This sequence belongs to the ribonuclease III family. As to quaternary structure, homodimer. The cofactor is Mg(2+).

It is found in the cytoplasm. It carries out the reaction Endonucleolytic cleavage to 5'-phosphomonoester.. Digests double-stranded RNA. Involved in the processing of primary rRNA transcript to yield the immediate precursors to the large and small rRNAs (23S and 16S). Processes some mRNAs, and tRNAs when they are encoded in the rRNA operon. Processes pre-crRNA and tracrRNA of type II CRISPR loci if present in the organism. The chain is Ribonuclease 3 from Bradyrhizobium diazoefficiens (strain JCM 10833 / BCRC 13528 / IAM 13628 / NBRC 14792 / USDA 110).